The chain runs to 422 residues: CinA-like protein (422 aa).

The protein belongs to the CinA family.

The protein is CinA-like protein of Mycolicibacterium vanbaalenii (strain DSM 7251 / JCM 13017 / BCRC 16820 / KCTC 9966 / NRRL B-24157 / PYR-1) (Mycobacterium vanbaalenii).